The primary structure comprises 148 residues: Protein ADM2 (148 aa).

Positions 1–24 are cleaved as a signal peptide; the sequence is MARIPTAALGCISLLCLQLPGSLS. Residues 25–98 constitute a propeptide that is removed on maturation; that stretch reads RSLGGDPRPV…HSGPRRHSGP (74 aa). 2 disordered regions span residues 26–57 and 70–101; these read SLGG…APRP and RGAG…PRRT. Cysteine 110 and cysteine 115 are joined by a disulfide. Tyrosine 147 carries the tyrosine amide modification.

It belongs to the adrenomedullin family. As to expression, expressed in the esophagus, stomach, jejunum, ileum, ileocecum, ascending colon, transverse colon, descending colon and rectum. Expressed in myocardial cells of the heart, renal tubular cells, hypothalamus, and pituitary.

It is found in the secreted. Functionally, intermedin/ADM2 is a peptide hormone that plays a role as physiological regulator of gastrointestinal and cardiovascular bioactivities mediated by the CALCRL-RAMPs receptor complexes. Activates the cAMP-dependent pathway through interaction with CALCRL-RAMP3 receptor complex. This is Protein ADM2 from Homo sapiens (Human).